Reading from the N-terminus, the 416-residue chain is Isocitrate dehydrogenase [NADP] (416 aa).

Residues 77–79 (TIT) and Arg84 contribute to the NADP(+) site. Thr79 lines the substrate pocket. Residues 96-102 (SPNGTIR), Arg111, and Arg134 each bind substrate. Asp254 contacts Mn(2+). Lys262 contacts NADP(+). Asp277 is a Mn(2+) binding site. Residues 312-317 (GTVTRH) and Asn330 contribute to the NADP(+) site.

Belongs to the isocitrate and isopropylmalate dehydrogenases family. In terms of assembly, heterodimer. Requires Mg(2+) as cofactor. Mn(2+) is required as a cofactor.

The protein resides in the cytoplasm. It carries out the reaction D-threo-isocitrate + NADP(+) = 2-oxoglutarate + CO2 + NADPH. In terms of biological role, may supply 2-oxoglutarate for amino acid biosynthesis and ammonia assimilation via the glutamine synthetase/glutamate synthase (GS/GOGAT) pathway. The chain is Isocitrate dehydrogenase [NADP] (ICDH-1) from Solanum tuberosum (Potato).